Reading from the N-terminus, the 192-residue chain is Peptidyl-tRNA hydrolase (192 aa).

Y18 is a tRNA binding site. The active-site Proton acceptor is the H23. TRNA is bound by residues F69, N71, and N117.

The protein belongs to the PTH family. Monomer.

Its subcellular location is the cytoplasm. It carries out the reaction an N-acyl-L-alpha-aminoacyl-tRNA + H2O = an N-acyl-L-amino acid + a tRNA + H(+). Its function is as follows. Hydrolyzes ribosome-free peptidyl-tRNAs (with 1 or more amino acids incorporated), which drop off the ribosome during protein synthesis, or as a result of ribosome stalling. In terms of biological role, catalyzes the release of premature peptidyl moieties from peptidyl-tRNA molecules trapped in stalled 50S ribosomal subunits, and thus maintains levels of free tRNAs and 50S ribosomes. In Neisseria meningitidis serogroup A / serotype 4A (strain DSM 15465 / Z2491), this protein is Peptidyl-tRNA hydrolase.